The chain runs to 411 residues: Eukaryotic initiation factor 4A-III (411 aa).

The residue at position 1 (M1) is an N-acetylmethionine. An N-acetylalanine; in Eukaryotic initiation factor 4A-III, N-terminally processed modification is found at A2. Phosphoserine occurs at positions 10 and 12. K19 is covalently cross-linked (Glycyl lysine isopeptide (Lys-Gly) (interchain with G-Cter in SUMO2)). Residues 38 to 66 (PTFDTMGLREDLLRGIYAYGFEKPSAIQQ) carry the Q motif motif. Residues K60, Q65, and 85–90 (GTGKTA) each bind ATP. The 171-residue stretch at 69-239 (IKQIIKGRDV…NKFMTDPIRI (171 aa)) folds into the Helicase ATP-binding domain. At K124 the chain carries N6-acetyllysine. K152 is covalently cross-linked (Glycyl lysine isopeptide (Lys-Gly) (interchain with G-Cter in SUMO2)). Phosphothreonine is present on T163. Positions 187–190 (DEAD) match the DEAD box motif. Residues K198 and K296 each carry the N6-acetyllysine modification. In terms of domain architecture, Helicase C-terminal spans 250 to 411 (GIKQFFVAVE…EMPMNVADLI (162 aa)). A Glycyl lysine isopeptide (Lys-Gly) (interchain with G-Cter in SUMO2) cross-link involves residue K314. The residue at position 321 (K321) is an N6-acetyllysine. ATP contacts are provided by residues D342 and 367–371 (RSGRY). Residues K374 and K382 each participate in a glycyl lysine isopeptide (Lys-Gly) (interchain with G-Cter in SUMO2) cross-link.

The protein belongs to the DEAD box helicase family. eIF4A subfamily. As to quaternary structure, identified in the spliceosome C complex. Core component of the mRNA splicing-dependent exon junction complex (EJC); the core complex contains CASC3, EIF4A3, MAGOH or MAGOHB, and RBM8A. Interacts with CASC3, MAGOH, NXF1, RBM8A and ALYREF/THOC4. Component of the ALYREF/THOC4-EJC-RNA complex; in the complex interacts with MAGOH, RBM8A and THOC4 (via the WXHD motif); these interactions are likely specific to RNA-bound EJC. May interact with NOM1. Interacts with POLDIP3. Interacts with CWC22 and PRPF19 in an RNA-independent manner. Direct interaction with CWC22 is mediated by the helicase C-terminal domain. Full interaction with CWC22 occurs only when EIF4A3 is not part of the EJC and prevents EIF4A3 binding to RNA. Identified in a complex composed of the EJC core, UPF3B and UPF2. The EJC core can also interact with UPF3A (in vitro). Interacts with NCBP3. Interacts with NRDE2. Interacts with DHX34; the interaction is RNA-independent.

It localises to the nucleus. The protein localises to the nucleus speckle. The protein resides in the cytoplasm. The enzyme catalyses ATP + H2O = ADP + phosphate + H(+). With respect to regulation, the ATPase activity is increased some 4-fold in the presence of RNA. ATP-dependent RNA helicase. Involved in pre-mRNA splicing as component of the spliceosome. Core component of the splicing-dependent multiprotein exon junction complex (EJC) deposited at splice junctions on mRNAs. The EJC is a dynamic structure consisting of core proteins and several peripheral nuclear and cytoplasmic associated factors that join the complex only transiently either during EJC assembly or during subsequent mRNA metabolism. The EJC marks the position of the exon-exon junction in the mature mRNA for the gene expression machinery and the core components remain bound to spliced mRNAs throughout all stages of mRNA metabolism thereby influencing downstream processes including nuclear mRNA export, subcellular mRNA localization, translation efficiency and nonsense-mediated mRNA decay (NMD). Its RNA-dependent ATPase and RNA-helicase activities are induced by CASC3, but abolished in presence of the MAGOH-RBM8A heterodimer, thereby trapping the ATP-bound EJC core onto spliced mRNA in a stable conformation. The inhibition of ATPase activity by the MAGOH-RBM8A heterodimer increases the RNA-binding affinity of the EJC. Involved in translational enhancement of spliced mRNAs after formation of the 80S ribosome complex. Binds spliced mRNA in sequence-independent manner, 20-24 nucleotides upstream of mRNA exon-exon junctions. Shows higher affinity for single-stranded RNA in an ATP-bound core EJC complex than after the ATP is hydrolyzed. Involved in the splicing modulation of BCL2L1/Bcl-X (and probably other apoptotic genes); specifically inhibits formation of proapoptotic isoforms; the function is different from the established EJC assembly. Involved in craniofacial development. In Bos taurus (Bovine), this protein is Eukaryotic initiation factor 4A-III (EIF4A3).